The sequence spans 153 residues: 6,7-dimethyl-8-ribityllumazine synthase (153 aa).

Residues phenylalanine 22, 56–58, and 80–82 contribute to the 5-amino-6-(D-ribitylamino)uracil site; these read AFE and TVI. 85 to 86 lines the (2S)-2-hydroxy-3-oxobutyl phosphate pocket; that stretch reads AT. The active-site Proton donor is histidine 88. Phenylalanine 113 serves as a coordination point for 5-amino-6-(D-ribitylamino)uracil. Residue arginine 127 coordinates (2S)-2-hydroxy-3-oxobutyl phosphate.

This sequence belongs to the DMRL synthase family.

It catalyses the reaction (2S)-2-hydroxy-3-oxobutyl phosphate + 5-amino-6-(D-ribitylamino)uracil = 6,7-dimethyl-8-(1-D-ribityl)lumazine + phosphate + 2 H2O + H(+). Its pathway is cofactor biosynthesis; riboflavin biosynthesis; riboflavin from 2-hydroxy-3-oxobutyl phosphate and 5-amino-6-(D-ribitylamino)uracil: step 1/2. Functionally, catalyzes the formation of 6,7-dimethyl-8-ribityllumazine by condensation of 5-amino-6-(D-ribitylamino)uracil with 3,4-dihydroxy-2-butanone 4-phosphate. This is the penultimate step in the biosynthesis of riboflavin. In Clostridium perfringens (strain 13 / Type A), this protein is 6,7-dimethyl-8-ribityllumazine synthase.